Consider the following 183-residue polypeptide: Endoribonuclease YbeY (183 aa).

Zn(2+)-binding residues include His-143, His-147, and His-153.

It belongs to the endoribonuclease YbeY family. The cofactor is Zn(2+).

The protein localises to the cytoplasm. In terms of biological role, single strand-specific metallo-endoribonuclease involved in late-stage 70S ribosome quality control and in maturation of the 3' terminus of the 16S rRNA. This is Endoribonuclease YbeY from Rickettsia bellii (strain OSU 85-389).